Here is a 359-residue protein sequence, read N- to C-terminus: Fructose-bisphosphate aldolase (359 aa).

Residue serine 50 participates in D-glyceraldehyde 3-phosphate binding. Residue aspartate 83 is the Proton donor of the active site. Zn(2+) is bound by residues histidine 84, aspartate 105, glutamate 142, and histidine 198. Residue glycine 199 participates in dihydroxyacetone phosphate binding. A Zn(2+)-binding site is contributed by histidine 232. Residues 233 to 235 (GSS) and 275 to 278 (NIDT) contribute to the dihydroxyacetone phosphate site.

It depends on Zn(2+) as a cofactor.

It catalyses the reaction beta-D-fructose 1,6-bisphosphate = D-glyceraldehyde 3-phosphate + dihydroxyacetone phosphate. It functions in the pathway carbohydrate degradation; glycolysis; D-glyceraldehyde 3-phosphate and glycerone phosphate from D-glucose: step 4/4. Functionally, catalyzes the aldol condensation of dihydroxyacetone phosphate (DHAP or glycerone-phosphate) with glyceraldehyde 3-phosphate (G3P) to form fructose 1,6-bisphosphate (FBP) in gluconeogenesis and the reverse reaction in glycolysis. This is Fructose-bisphosphate aldolase from Nostoc sp. (strain PCC 7120 / SAG 25.82 / UTEX 2576).